We begin with the raw amino-acid sequence, 138 residues long: MLMPKRTKYRRPHRVSYEGKAKGRNEIINGDFALVAKEGAWITNRQIEAARIAMTREMKRLGKVWINIFPHLAKTKKPMEVRMGSGKGAPDSWVAVVKEGKIMFEINGVSEATAREALRKAGHKLPIKVKIVKRGEEA.

It belongs to the universal ribosomal protein uL16 family. Part of the 50S ribosomal subunit.

Its function is as follows. Binds 23S rRNA and is also seen to make contacts with the A and possibly P site tRNAs. The sequence is that of Large ribosomal subunit protein uL16 from Acholeplasma laidlawii (strain PG-8A).